The primary structure comprises 352 residues: Biotin synthase (352 aa).

A Radical SAM core domain is found at 44 to 262 (NRVQVSTLLS…LAVARIMMPK (219 aa)). [4Fe-4S] cluster-binding residues include Cys-59, Cys-63, and Cys-66. [2Fe-2S] cluster is bound by residues Cys-103, Cys-134, Cys-194, and Arg-266.

This sequence belongs to the radical SAM superfamily. Biotin synthase family. In terms of assembly, homodimer. [4Fe-4S] cluster serves as cofactor. Requires [2Fe-2S] cluster as cofactor.

It carries out the reaction (4R,5S)-dethiobiotin + (sulfur carrier)-SH + 2 reduced [2Fe-2S]-[ferredoxin] + 2 S-adenosyl-L-methionine = (sulfur carrier)-H + biotin + 2 5'-deoxyadenosine + 2 L-methionine + 2 oxidized [2Fe-2S]-[ferredoxin]. Its pathway is cofactor biosynthesis; biotin biosynthesis; biotin from 7,8-diaminononanoate: step 2/2. In terms of biological role, catalyzes the conversion of dethiobiotin (DTB) to biotin by the insertion of a sulfur atom into dethiobiotin via a radical-based mechanism. The sequence is that of Biotin synthase from Pseudomonas paraeruginosa (strain DSM 24068 / PA7) (Pseudomonas aeruginosa (strain PA7)).